The chain runs to 321 residues: Prephenate dehydratase (321 aa).

A Prephenate dehydratase domain is found at 3–189 (RIAYLGPEGT…ARTRFVLVGR (187 aa)). In terms of domain architecture, ACT spans 203 to 280 (SAVLRIDNQP…ADVRYLGSWP (78 aa)).

Homodimer.

It catalyses the reaction prephenate + H(+) = 3-phenylpyruvate + CO2 + H2O. The protein operates within amino-acid biosynthesis; L-phenylalanine biosynthesis; phenylpyruvate from prephenate: step 1/1. In Mycobacterium bovis (strain ATCC BAA-935 / AF2122/97), this protein is Prephenate dehydratase (pheA).